A 182-amino-acid chain; its full sequence is ATP-dependent protease subunit HslV (182 aa).

The active site involves Thr10. 3 residues coordinate Na(+): Ala166, Cys169, and Ser172.

Belongs to the peptidase T1B family. HslV subfamily. In terms of assembly, a double ring-shaped homohexamer of HslV is capped on each side by a ring-shaped HslU homohexamer. The assembly of the HslU/HslV complex is dependent on binding of ATP.

The protein localises to the cytoplasm. It catalyses the reaction ATP-dependent cleavage of peptide bonds with broad specificity.. Its activity is regulated as follows. Allosterically activated by HslU binding. In terms of biological role, protease subunit of a proteasome-like degradation complex believed to be a general protein degrading machinery. The sequence is that of ATP-dependent protease subunit HslV from Rickettsia bellii (strain OSU 85-389).